Here is a 500-residue protein sequence, read N- to C-terminus: Probable malate:quinone oxidoreductase (500 aa).

It belongs to the MQO family. FAD is required as a cofactor.

It carries out the reaction (S)-malate + a quinone = a quinol + oxaloacetate. It participates in carbohydrate metabolism; tricarboxylic acid cycle; oxaloacetate from (S)-malate (quinone route): step 1/1. The polypeptide is Probable malate:quinone oxidoreductase (Bacillus anthracis (strain A0248)).